The primary structure comprises 393 residues: Serpin-Z4 (393 aa).

The RCL stretch occupies residues 342 to 366; the sequence is GTEAAAVSVASMTKDMLLMGDFVAD.

Belongs to the serpin family.

Its function is as follows. Probable serine protease inhibitor. This chain is Serpin-Z4, found in Arabidopsis thaliana (Mouse-ear cress).